The primary structure comprises 228 residues: Protein N-lysine methyltransferase METTL21D (228 aa).

Residue A2 is modified to N-acetylalanine. S-adenosyl-L-methionine is bound by residues W43, 75–77, D96, W126, A142, and Y147; that span reads GSG.

Belongs to the methyltransferase superfamily. METTL21 family. In terms of assembly, interacts with ALKBH6. Interacts with ASPSCR1 and UBXN6; interaction with ASPSCR1, but not with UBXN6, enhances VCP methylation. Widely expressed.

The protein resides in the cytoplasm. It carries out the reaction L-lysyl-[protein] + 3 S-adenosyl-L-methionine = N(6),N(6),N(6)-trimethyl-L-lysyl-[protein] + 3 S-adenosyl-L-homocysteine + 3 H(+). Functionally, protein N-lysine methyltransferase that specifically trimethylates 'Lys-315' of VCP/p97; this modification may decrease VCP ATPase activity. The protein is Protein N-lysine methyltransferase METTL21D (Vcpkmt) of Mus musculus (Mouse).